Reading from the N-terminus, the 66-residue chain is Gas vesicle protein A (66 aa).

This sequence belongs to the gas vesicle GvpA family. In terms of assembly, the gas vesicle shell is 2 nm thick and consists of a single layer of this protein. It forms helical ribs nearly perpendicular to the long axis of the vesicle.

The protein resides in the gas vesicle shell. Functionally, gas vesicles are hollow, gas filled proteinaceous nanostructures found in some microorganisms. During planktonic growth they allow positioning of the organism at a favorable depth for light or nutrient acquisition. GvpA forms the protein shell. This chain is Gas vesicle protein A, found in Thiocapsa pendens (Amoebobacter pendens).